The following is a 159-amino-acid chain: MHKRAIYPGTFDPVTNGHADLIERAANLFEHVIIGIAANPSKQPRFTLAERVELLKTVTAHLDNVEVVGFSGLLVDFAKDQNASVLVRGLRAVSDFEYEFQLANMNRRLSPDLESVFLTPAEENSFISSTLVKEVALHGGDVSQFVHIEVANALTKKAK.

T10 is a binding site for substrate. ATP is bound by residues 10 to 11 (TF) and H18. Residues K42, L74, and R88 each contribute to the substrate site. ATP contacts are provided by residues 89–91 (GLR), E99, and 124–130 (NSFISST).

It belongs to the bacterial CoaD family. Homohexamer. It depends on Mg(2+) as a cofactor.

The protein localises to the cytoplasm. It carries out the reaction (R)-4'-phosphopantetheine + ATP + H(+) = 3'-dephospho-CoA + diphosphate. It functions in the pathway cofactor biosynthesis; coenzyme A biosynthesis; CoA from (R)-pantothenate: step 4/5. Functionally, reversibly transfers an adenylyl group from ATP to 4'-phosphopantetheine, yielding dephospho-CoA (dPCoA) and pyrophosphate. This is Phosphopantetheine adenylyltransferase from Shewanella pealeana (strain ATCC 700345 / ANG-SQ1).